The primary structure comprises 337 residues: Viral cathepsin (337 aa).

An N-terminal signal peptide occupies residues 1-18; sequence MYLIYYYTIIAVATASIA. A propeptide spans 19-126 (activation peptide); sequence NEKIFYDIDS…VTVAGPSART (108 aa). Intrachain disulfides connect Cys-147–Cys-188, Cys-181–Cys-221, and Cys-276–Cys-324. Residue Cys-150 is part of the active site. Catalysis depends on residues His-283 and Asn-303.

The protein belongs to the peptidase C1 family. Synthesized as an inactive proenzyme and activated by proteolytic removal of the inhibitory propeptide.

It catalyses the reaction Endopeptidase of broad specificity, hydrolyzing substrates of both cathepsin L and cathepsin B.. Cysteine protease that plays an essential role in host liquefaction to facilitate horizontal transmission of the virus. May participate in the degradation of foreign protein expressed by the baculovirus system. The sequence is that of Viral cathepsin (VCATH) from Spodoptera litura multicapsid nucleopolyhedrovirus (SpltMNPV).